We begin with the raw amino-acid sequence, 489 residues long: Cobyric acid synthase (489 aa).

A GATase cobBQ-type domain is found at 254 to 442 (ARVIAVPVLP…VHGLFADDRQ (189 aa)). The active-site Nucleophile is C336. The active site involves H434.

Belongs to the CobB/CobQ family. CobQ subfamily.

The protein operates within cofactor biosynthesis; adenosylcobalamin biosynthesis. In terms of biological role, catalyzes amidations at positions B, D, E, and G on adenosylcobyrinic A,C-diamide. NH(2) groups are provided by glutamine, and one molecule of ATP is hydrogenolyzed for each amidation. This is Cobyric acid synthase from Methylobacterium nodulans (strain LMG 21967 / CNCM I-2342 / ORS 2060).